Consider the following 370-residue polypeptide: Dual-specificity RNA methyltransferase RlmN (370 aa).

Glu-93 (proton acceptor) is an active-site residue. The region spanning 99-337 (AEGRGTLCVS…VTTVRKTRGD (239 aa)) is the Radical SAM core domain. The cysteines at positions 106 and 343 are disulfide-linked. Residues Cys-113, Cys-117, and Cys-120 each contribute to the [4Fe-4S] cluster site. S-adenosyl-L-methionine-binding positions include 167–168 (GE), Ser-199, 221–223 (SLH), and Asn-300. Catalysis depends on Cys-343, which acts as the S-methylcysteine intermediate.

It belongs to the radical SAM superfamily. RlmN family. [4Fe-4S] cluster serves as cofactor.

It localises to the cytoplasm. It catalyses the reaction adenosine(2503) in 23S rRNA + 2 reduced [2Fe-2S]-[ferredoxin] + 2 S-adenosyl-L-methionine = 2-methyladenosine(2503) in 23S rRNA + 5'-deoxyadenosine + L-methionine + 2 oxidized [2Fe-2S]-[ferredoxin] + S-adenosyl-L-homocysteine. It carries out the reaction adenosine(37) in tRNA + 2 reduced [2Fe-2S]-[ferredoxin] + 2 S-adenosyl-L-methionine = 2-methyladenosine(37) in tRNA + 5'-deoxyadenosine + L-methionine + 2 oxidized [2Fe-2S]-[ferredoxin] + S-adenosyl-L-homocysteine. Functionally, specifically methylates position 2 of adenine 2503 in 23S rRNA and position 2 of adenine 37 in tRNAs. m2A2503 modification seems to play a crucial role in the proofreading step occurring at the peptidyl transferase center and thus would serve to optimize ribosomal fidelity. The chain is Dual-specificity RNA methyltransferase RlmN from Francisella tularensis subsp. tularensis (strain FSC 198).